The chain runs to 555 residues: Membrane protein insertase YidC (555 aa).

The helical transmembrane segment at 7–24 threads the bilayer; it reads ILWVIFSMSLVLLYDNWQ. Residues 61–81 are disordered; that stretch reads TAGAAAPAAPGGAPQAAAQPT. A run of 5 helical transmembrane segments spans residues 341 to 361, 364 to 384, 430 to 450, 468 to 488, and 503 to 523; these read GWLTILAKPLFWLLEKLHGFL, WGWSIIALTVLIKLVFFPLSA, LGGCLPIVIQIPVFIALYWVL, LSVPDPFYILPIVMAVSMFVQ, and VMMIMPLVFSFMFFFFPAGLV.

The protein belongs to the OXA1/ALB3/YidC family. Type 1 subfamily. As to quaternary structure, interacts with the Sec translocase complex via SecD. Specifically interacts with transmembrane segments of nascent integral membrane proteins during membrane integration.

The protein localises to the cell inner membrane. In terms of biological role, required for the insertion and/or proper folding and/or complex formation of integral membrane proteins into the membrane. Involved in integration of membrane proteins that insert both dependently and independently of the Sec translocase complex, as well as at least some lipoproteins. Aids folding of multispanning membrane proteins. The protein is Membrane protein insertase YidC of Cupriavidus pinatubonensis (strain JMP 134 / LMG 1197) (Cupriavidus necator (strain JMP 134)).